The following is a 547-amino-acid chain: Probable ATP-dependent RNA helicase DDX56 (547 aa).

The Q motif signature appears at 7-35 (LGFEHMGLDPRLLQAVTDLGWSRPTLIQE). In terms of domain architecture, Helicase ATP-binding spans 38 to 218 (IPLALEGKDL…ELILHNPVTL (181 aa)). 51-58 (ARTGSGKT) serves as a coordination point for ATP. A Phosphoserine modification is found at Ser-126. The residue at position 141 (Thr-141) is a Phosphothreonine. The short motif at 166–169 (DEAD) is the DEAD box element. Residues 230–424 (QLQQFQVVCE…PYQFRMEEIE (195 aa)) enclose the Helicase C-terminal domain. 2 stretches are compositionally biased toward basic residues: residues 506–525 (RPHK…KRAK) and 532–547 (SFKH…AKPS). Residues 506–547 (RPHKKRKKLSSSCRKAKRAKSQNPLRSFKHKGKKFRPTAKPS) are disordered. Residue Ser-532 is modified to Phosphoserine.

It belongs to the DEAD box helicase family. DDX56/DBP9 subfamily. May form homooligomeric complexes. Interacts with IRF3. Interacts with OCT4 and POU5F1. In terms of assembly, (Microbial infection) Interacts with West Nile virus capsid protein C. As to quaternary structure, (Microbial infection) Interacts with foot-and-mouth disease virus protein 3A; this interaction leads to inhibition of type I interferon production. (Microbial infection) Interacts with EMCV protein 3C; this interaction leads to inhibition of type I interferon production. Detected in heart, brain, liver, pancreas, placenta and lung.

It is found in the nucleus. It localises to the nucleolus. The catalysed reaction is ATP + H2O = ADP + phosphate + H(+). Nucleolar RNA helicase that plays a role in various biological processes including innate immunity, ribosome biogenesis or nucleolus organization. Plays an essential role in maintaining nucleolar integrity in planarian stem cells. Maintains embryonic stem cells proliferation by conventional regulation of ribosome assembly and interaction with OCT4 and POU5F1 complex. Regulates antiviral innate immunity by inhibiting the virus-triggered signaling nuclear translocation of IRF3. Mechanistically, acts by disrupting the interaction between IRF3 and importin IPO5. May play a role in later stages of the processing of the pre-ribosomal particles leading to mature 60S ribosomal subunits. Has intrinsic ATPase activity. Its function is as follows. (Microbial infection) Helicase activity is important for packaging viral RNA into virions during West Nile virus infection. In terms of biological role, (Microbial infection) Plays a positive role in foot-and-mouth disease virus replication by inhibiting the phosphorylation of IRF3 leading to inhibition of type I interferon. Functionally, (Microbial infection) Plays a positive role in EMCV replication by interrupting IRF3 phosphorylation and its nucleus translocation. The sequence is that of Probable ATP-dependent RNA helicase DDX56 (DDX56) from Homo sapiens (Human).